A 506-amino-acid chain; its full sequence is 2-isopropylmalate synthase (506 aa).

The region spanning 4-266 is the Pyruvate carboxyltransferase domain; the sequence is ILFMDTTLRD…EPSMTLKEIK (263 aa). Mn(2+) contacts are provided by aspartate 13, histidine 201, histidine 203, and asparagine 237. The segment at 390 to 506 is regulatory domain; the sequence is NITQLQVHFV…KLKSFIQLVK (117 aa).

It belongs to the alpha-IPM synthase/homocitrate synthase family. LeuA type 1 subfamily. Homodimer. It depends on Mn(2+) as a cofactor.

It is found in the cytoplasm. It carries out the reaction 3-methyl-2-oxobutanoate + acetyl-CoA + H2O = (2S)-2-isopropylmalate + CoA + H(+). It participates in amino-acid biosynthesis; L-leucine biosynthesis; L-leucine from 3-methyl-2-oxobutanoate: step 1/4. In terms of biological role, catalyzes the condensation of the acetyl group of acetyl-CoA with 3-methyl-2-oxobutanoate (2-ketoisovalerate) to form 3-carboxy-3-hydroxy-4-methylpentanoate (2-isopropylmalate). This Bacillus cereus (strain ATCC 10987 / NRS 248) protein is 2-isopropylmalate synthase.